Here is a 141-residue protein sequence, read N- to C-terminus: Hemoglobin subunit alpha (141 aa).

The Globin domain occupies 1 to 141 (VLSPADKTNV…VSTVLTSKYR (141 aa)). Position 3 is a phosphoserine (S3). N6-succinyllysine is present on K7. Phosphothreonine is present on T8. The residue at position 11 (K11) is an N6-succinyllysine. N6-acetyllysine; alternate is present on K16. Position 16 is an N6-succinyllysine; alternate (K16). At Y24 the chain carries Phosphotyrosine. Position 35 is a phosphoserine (S35). The residue at position 40 (K40) is an N6-succinyllysine. S49 is subject to Phosphoserine. H58 serves as a coordination point for O2. A heme b-binding site is contributed by H87. At S102 the chain carries Phosphoserine. T108 is modified (phosphothreonine). Phosphoserine occurs at positions 124 and 131. 2 positions are modified to phosphothreonine: T134 and T137. The residue at position 138 (S138) is a Phosphoserine.

The protein belongs to the globin family. In terms of assembly, heterotetramer of two alpha chains and two beta chains. As to expression, red blood cells.

In terms of biological role, involved in oxygen transport from the lung to the various peripheral tissues. Functionally, hemopressin acts as an antagonist peptide of the cannabinoid receptor CNR1. Hemopressin-binding efficiently blocks cannabinoid receptor CNR1 and subsequent signaling. The polypeptide is Hemoglobin subunit alpha (HBA) (Loris tardigradus (Slender loris)).